The sequence spans 60 residues: UPF0509 protein ESA_01586 (60 aa).

It belongs to the UPF0509 family.

The sequence is that of UPF0509 protein ESA_01586 from Cronobacter sakazakii (strain ATCC BAA-894) (Enterobacter sakazakii).